The following is a 140-amino-acid chain: Protein S40-1 (140 aa).

The disordered stretch occupies residues Tyr16–Ser58. A compositionally biased stretch (basic and acidic residues) spans Arg20–Trp44.

It belongs to the senescence regulator S40 family.

The protein resides in the cytoplasm. In Arabidopsis thaliana (Mouse-ear cress), this protein is Protein S40-1.